We begin with the raw amino-acid sequence, 307 residues long: Pyridoxal 5'-phosphate synthase subunit PdxS (307 aa).

Aspartate 37 serves as a coordination point for D-ribose 5-phosphate. Lysine 94 serves as the catalytic Schiff-base intermediate with D-ribose 5-phosphate. A D-ribose 5-phosphate-binding site is contributed by glycine 166. Arginine 178 is a binding site for D-glyceraldehyde 3-phosphate. Residues glycine 227 and 248 to 249 contribute to the D-ribose 5-phosphate site; that span reads GS.

The protein belongs to the PdxS/SNZ family. In the presence of PdxT, forms a dodecamer of heterodimers.

It carries out the reaction aldehydo-D-ribose 5-phosphate + D-glyceraldehyde 3-phosphate + L-glutamine = pyridoxal 5'-phosphate + L-glutamate + phosphate + 3 H2O + H(+). Its pathway is cofactor biosynthesis; pyridoxal 5'-phosphate biosynthesis. In terms of biological role, catalyzes the formation of pyridoxal 5'-phosphate from ribose 5-phosphate (RBP), glyceraldehyde 3-phosphate (G3P) and ammonia. The ammonia is provided by the PdxT subunit. Can also use ribulose 5-phosphate and dihydroxyacetone phosphate as substrates, resulting from enzyme-catalyzed isomerization of RBP and G3P, respectively. The protein is Pyridoxal 5'-phosphate synthase subunit PdxS of Mycobacterium leprae (strain Br4923).